Consider the following 180-residue polypeptide: Aspartate 1-decarboxylase (180 aa).

The active-site Schiff-base intermediate with substrate; via pyruvic acid is Ser24. Position 24 is a pyruvic acid (Ser) (Ser24). Thr56 is a binding site for substrate. Tyr57 functions as the Proton donor in the catalytic mechanism. Residue 72–74 participates in substrate binding; the sequence is GAA.

It belongs to the PanD family. As to quaternary structure, heterooctamer of four alpha and four beta subunits. Requires pyruvate as cofactor. Is synthesized initially as an inactive proenzyme, which is activated by self-cleavage at a specific serine bond to produce a beta-subunit with a hydroxyl group at its C-terminus and an alpha-subunit with a pyruvoyl group at its N-terminus.

Its subcellular location is the cytoplasm. The enzyme catalyses L-aspartate + H(+) = beta-alanine + CO2. It participates in cofactor biosynthesis; (R)-pantothenate biosynthesis; beta-alanine from L-aspartate: step 1/1. Catalyzes the pyruvoyl-dependent decarboxylation of aspartate to produce beta-alanine. The polypeptide is Aspartate 1-decarboxylase (Paramagnetospirillum magneticum (strain ATCC 700264 / AMB-1) (Magnetospirillum magneticum)).